The following is a 229-amino-acid chain: ATP synthase subunit a (229 aa).

Helical transmembrane passes span 16–36, 81–101, 110–130, 142–162, 175–195, and 196–216; these read YAHV…GAAA, YIPF…LGMI, NMNT…FQGV, FMGP…VSHI, VMMG…IGVP, and IPFY…FTLL.

It belongs to the ATPase A chain family. In terms of assembly, F-type ATPases have 2 components, CF(1) - the catalytic core - and CF(0) - the membrane proton channel. CF(1) has five subunits: alpha(3), beta(3), gamma(1), delta(1), epsilon(1). CF(0) has three main subunits: a(1), b(2) and c(9-12). The alpha and beta chains form an alternating ring which encloses part of the gamma chain. CF(1) is attached to CF(0) by a central stalk formed by the gamma and epsilon chains, while a peripheral stalk is formed by the delta and b chains.

It is found in the cell inner membrane. Functionally, key component of the proton channel; it plays a direct role in the translocation of protons across the membrane. The chain is ATP synthase subunit a from Bdellovibrio bacteriovorus (strain ATCC 15356 / DSM 50701 / NCIMB 9529 / HD100).